The sequence spans 375 residues: Tyrosine--tRNA ligase (375 aa).

Positions 37, 168, 172, 175, and 190 each coordinate L-tyrosine. The 'KMSKS' region motif lies at 251–255 (KMSKS). Lysine 254 lines the ATP pocket.

This sequence belongs to the class-I aminoacyl-tRNA synthetase family. TyrS type 4 subfamily. Homodimer.

The protein localises to the cytoplasm. It catalyses the reaction tRNA(Tyr) + L-tyrosine + ATP = L-tyrosyl-tRNA(Tyr) + AMP + diphosphate + H(+). In terms of biological role, catalyzes the attachment of tyrosine to tRNA(Tyr) in a two-step reaction: tyrosine is first activated by ATP to form Tyr-AMP and then transferred to the acceptor end of tRNA(Tyr). This Thermococcus onnurineus (strain NA1) protein is Tyrosine--tRNA ligase.